A 64-amino-acid polypeptide reads, in one-letter code: Putative neurotoxin 6 (64 aa).

A signal peptide spans 1 to 24; that stretch reads MKNKFAALVITLFVLVLAIDNVTT.

The protein belongs to the scolopendra neurotoxin 6 family. In terms of processing, contains 3 disulfide bonds. Expressed by the venom gland.

It localises to the secreted. This is Putative neurotoxin 6 from Scolopendra mutilans (Chinese red-headed centipede).